The sequence spans 1360 residues: DNA mismatch repair protein Msh6 (1360 aa).

The tract at residues 1–84 (MSRQSTLYSF…GLRRSVAPAA (84 aa)) is disordered. A phosphoserine mark is found at Ser-14, Ser-41, and Ser-43. Low complexity predominate over residues 33–51 (RAAAAPGASPSPGGDAAWS). Lys-70 bears the N6-acetyllysine mark. Phosphoserine is present on residues Ser-79, Ser-91, Ser-137, Ser-200, Ser-219, and Ser-227. The region spanning 92–154 (PGDLVWAKME…KRLLKPYTGS (63 aa)) is the PWWP domain. Residues 195 to 362 (VCDEPSEPEE…SGGGDDSSRP (168 aa)) are disordered. 2 stretches are compositionally biased toward acidic residues: residues 198–209 (EPSEPEEEEEME) and 219–230 (SEEDNEIESEEE). The span at 240-249 (RSSRQIKKRR) shows a compositional bias: basic residues. 4 positions are modified to phosphoserine: Ser-252, Ser-254, Ser-256, and Ser-261. The span at 263-273 (VEFKPDTKEEG) shows a compositional bias: basic and acidic residues. The residue at position 269 (Thr-269) is a Phosphothreonine. Ser-274, Ser-275, Ser-279, Ser-280, and Ser-309 each carry phosphoserine. Over residues 320-351 (PSATKQATSISSETKNTLRAFSAPQNSESQAH) the composition is skewed to polar residues. Phosphothreonine is present on Thr-488. Lys-504 is subject to N6-acetyllysine. Ser-830 and Ser-935 each carry phosphoserine. Phosphothreonine is present on Thr-1010. 1134–1141 (GPNMGGKS) is a binding site for ATP.

The protein belongs to the DNA mismatch repair MutS family. Component of the DNA mismatch repair (MMR) complex composed at least of MSH2, MSH3, MSH6, PMS1 and MLH1. Heterodimer consisting of MSH2-MSH6 (MutS alpha). Forms a ternary complex with MutL alpha (MLH1-PMS1). Interacts with MCM9. Part of the BRCA1-associated genome surveillance complex (BASC), which contains BRCA1, MSH2, MSH6, MLH1, ATM, BLM, PMS2 and the RAD50-MRE11-NBS1 protein complex. This association could be a dynamic process changing throughout the cell cycle and within subnuclear domains. As to quaternary structure, (Microbial infection) Interacts with herpes simplex virus 1 protein UL12. The N-terminus is blocked. In terms of processing, phosphorylated by PRKCZ, which may prevent MutS alpha degradation by the ubiquitin-proteasome pathway.

The protein localises to the nucleus. It is found in the chromosome. Functionally, component of the post-replicative DNA mismatch repair system (MMR). Heterodimerizes with MSH2 to form MutS alpha, which binds to DNA mismatches thereby initiating DNA repair. When bound, MutS alpha bends the DNA helix and shields approximately 20 base pairs, and recognizes single base mismatches and dinucleotide insertion-deletion loops (IDL) in the DNA. After mismatch binding, forms a ternary complex with the MutL alpha heterodimer, which is thought to be responsible for directing the downstream MMR events, including strand discrimination, excision, and resynthesis. ATP binding and hydrolysis play a pivotal role in mismatch repair functions. The ATPase activity associated with MutS alpha regulates binding similar to a molecular switch: mismatched DNA provokes ADP--&gt;ATP exchange, resulting in a discernible conformational transition that converts MutS alpha into a sliding clamp capable of hydrolysis-independent diffusion along the DNA backbone. This transition is crucial for mismatch repair. MutS alpha may also play a role in DNA homologous recombination repair. Recruited on chromatin in G1 and early S phase via its PWWP domain that specifically binds trimethylated 'Lys-36' of histone H3 (H3K36me3): early recruitment to chromatin to be replicated allowing a quick identification of mismatch repair to initiate the DNA mismatch repair reaction. This chain is DNA mismatch repair protein Msh6, found in Homo sapiens (Human).